The chain runs to 481 residues: Phosphoglycerate kinase 1, chloroplastic (481 aa).

Residues 1–75 (MASAAASSAF…VRGKGSRGVV (75 aa)) constitute a chloroplast transit peptide. Residue Ser-81 is modified to Phosphoserine. Positions 99, 100, 102, 116, 138, 139, 141, 142, 197, 229, and 230 each coordinate (2R)-3-phosphoglycerate. Residue Gly-275 coordinates ADP. Residue Gly-275 coordinates CDP. AMP-binding residues include Lys-277 and Lys-281. Lys-281 is a binding site for ATP. Position 299 (Gly-299) interacts with ADP. A CDP-binding site is contributed by Gly-299. Gly-300 and Gly-372 together coordinate AMP. Residues Gly-300 and Gly-372 each contribute to the ATP site. Positions 397 and 402 each coordinate CDP. Position 402 (Phe-402) interacts with ADP. Glu-403 is an AMP binding site. Glu-403, Asp-434, and Ser-435 together coordinate ATP. Asp-434 lines the Mg(2+) pocket.

Belongs to the phosphoglycerate kinase family. In terms of assembly, monomer. Binds to FTSZ2-1 and FTSZ2-2. Mg(2+) is required as a cofactor.

It localises to the plastid. It is found in the chloroplast. It carries out the reaction (2R)-3-phosphoglycerate + ATP = (2R)-3-phospho-glyceroyl phosphate + ADP. Its pathway is carbohydrate biosynthesis; Calvin cycle. Its function is as follows. May trigger the phosphorylation of FTSZ2-1 and FTSZ2-2. In Arabidopsis thaliana (Mouse-ear cress), this protein is Phosphoglycerate kinase 1, chloroplastic.